The following is a 383-amino-acid chain: Fructose-1,6-bisphosphate aldolase/phosphatase (383 aa).

Asp11 acts as the Proton acceptor; for FBP phosphatase activity in catalysis. The Mg(2+) site is built by Asp11, His18, Asp52, and Asp53. His18 serves as a coordination point for beta-D-fructose 1,6-bisphosphate. His18 lines the dihydroxyacetone phosphate pocket. Tyr90 is a binding site for beta-D-fructose 1,6-bisphosphate. Gln94 serves as a coordination point for Mg(2+). 103-104 (GN) is a binding site for beta-D-fructose 1,6-bisphosphate. Mg(2+) is bound at residue Asp131. Lys132 lines the beta-D-fructose 1,6-bisphosphate pocket. Lys132 lines the dihydroxyacetone phosphate pocket. Catalysis depends on Tyr228, which acts as the Proton donor/acceptor; for FBP aldolase activity. Residues Lys231, Asp232, and Asp233 each coordinate Mg(2+). Residue Lys231 is the Schiff-base intermediate with DHAP; for FBP aldolase activity of the active site. Residues 241–242 (QH), Arg265, Asp286, and Tyr347 each bind beta-D-fructose 1,6-bisphosphate. Dihydroxyacetone phosphate-binding residues include Arg265 and Asp286. The interval 361-383 (FKKEEDVKKAKPSVYTSKDQGMD) is disordered. The segment covering 374–383 (VYTSKDQGMD) has biased composition (polar residues).

Belongs to the FBP aldolase/phosphatase family. As to quaternary structure, homooctamer; dimer of tetramers. Requires Mg(2+) as cofactor.

It carries out the reaction beta-D-fructose 1,6-bisphosphate + H2O = beta-D-fructose 6-phosphate + phosphate. The catalysed reaction is beta-D-fructose 1,6-bisphosphate = D-glyceraldehyde 3-phosphate + dihydroxyacetone phosphate. Its pathway is carbohydrate biosynthesis; gluconeogenesis. Catalyzes two subsequent steps in gluconeogenesis: the aldol condensation of dihydroxyacetone phosphate (DHAP) and glyceraldehyde-3-phosphate (GA3P) to fructose-1,6-bisphosphate (FBP), and the dephosphorylation of FBP to fructose-6-phosphate (F6P). The protein is Fructose-1,6-bisphosphate aldolase/phosphatase of Metallosphaera sedula (strain ATCC 51363 / DSM 5348 / JCM 9185 / NBRC 15509 / TH2).